The primary structure comprises 142 residues: Ribosome-binding factor A (142 aa).

Positions 120–142 are disordered; the sequence is TLGEVQSESDQPTTYETTTVNKT. Positions 123-142 are enriched in polar residues; sequence EVQSESDQPTTYETTTVNKT.

This sequence belongs to the RbfA family. As to quaternary structure, monomer. Binds 30S ribosomal subunits, but not 50S ribosomal subunits or 70S ribosomes.

It is found in the cytoplasm. Functionally, one of several proteins that assist in the late maturation steps of the functional core of the 30S ribosomal subunit. Associates with free 30S ribosomal subunits (but not with 30S subunits that are part of 70S ribosomes or polysomes). Required for efficient processing of 16S rRNA. May interact with the 5'-terminal helix region of 16S rRNA. This is Ribosome-binding factor A from Prochlorococcus marinus (strain MIT 9313).